The sequence spans 275 residues: Large ribosomal subunit protein uL2 (275 aa).

A disordered region spans residues 219–263; it reads EVRGAAMNPRDHPHGGGEGRAPRGMPTPKTKWGKPARGVKTRHNP. Residues 227–239 show a composition bias toward basic and acidic residues; the sequence is PRDHPHGGGEGRA. The span at 249–262 shows a compositional bias: basic residues; that stretch reads KWGKPARGVKTRHN.

The protein belongs to the universal ribosomal protein uL2 family. In terms of assembly, part of the 50S ribosomal subunit. Forms a bridge to the 30S subunit in the 70S ribosome.

Its function is as follows. One of the primary rRNA binding proteins. Required for association of the 30S and 50S subunits to form the 70S ribosome, for tRNA binding and peptide bond formation. It has been suggested to have peptidyltransferase activity; this is somewhat controversial. Makes several contacts with the 16S rRNA in the 70S ribosome. This is Large ribosomal subunit protein uL2 from Roseiflexus castenholzii (strain DSM 13941 / HLO8).